The sequence spans 249 residues: Sugar fermentation stimulation protein homolog (249 aa).

This sequence belongs to the SfsA family.

This is Sugar fermentation stimulation protein homolog from Prochlorococcus marinus (strain MIT 9515).